A 130-amino-acid polypeptide reads, in one-letter code: Small ribosomal subunit protein uS8 (130 aa).

The protein belongs to the universal ribosomal protein uS8 family. As to quaternary structure, part of the 30S ribosomal subunit. Contacts proteins S5 and S12.

Functionally, one of the primary rRNA binding proteins, it binds directly to 16S rRNA central domain where it helps coordinate assembly of the platform of the 30S subunit. This Marinobacter nauticus (strain ATCC 700491 / DSM 11845 / VT8) (Marinobacter aquaeolei) protein is Small ribosomal subunit protein uS8.